Consider the following 260-residue polypeptide: Hydroxyethylthiazole kinase (260 aa).

Substrate is bound at residue Met-49. Positions 124 and 170 each coordinate ATP. Gly-197 lines the substrate pocket.

Belongs to the Thz kinase family. Mg(2+) serves as cofactor.

It catalyses the reaction 5-(2-hydroxyethyl)-4-methylthiazole + ATP = 4-methyl-5-(2-phosphooxyethyl)-thiazole + ADP + H(+). The protein operates within cofactor biosynthesis; thiamine diphosphate biosynthesis; 4-methyl-5-(2-phosphoethyl)-thiazole from 5-(2-hydroxyethyl)-4-methylthiazole: step 1/1. Functionally, catalyzes the phosphorylation of the hydroxyl group of 4-methyl-5-beta-hydroxyethylthiazole (THZ). The sequence is that of Hydroxyethylthiazole kinase from Yersinia enterocolitica serotype O:8 / biotype 1B (strain NCTC 13174 / 8081).